The chain runs to 525 residues: GMP synthase [glutamine-hydrolyzing] (525 aa).

Residues 8 to 206 (PLLILDFGSQ…VVDICKASTD (199 aa)) form the Glutamine amidotransferase type-1 domain. The active-site Nucleophile is the Cys85. Active-site residues include His180 and Glu182. Residues 207 to 400 (WTPEHIIDEA…LGLPHDMVYR (194 aa)) enclose the GMPS ATP-PPase domain. 234–240 (SGGVDSS) provides a ligand contact to ATP.

Homodimer.

The catalysed reaction is XMP + L-glutamine + ATP + H2O = GMP + L-glutamate + AMP + diphosphate + 2 H(+). Its pathway is purine metabolism; GMP biosynthesis; GMP from XMP (L-Gln route): step 1/1. In terms of biological role, catalyzes the synthesis of GMP from XMP. The polypeptide is GMP synthase [glutamine-hydrolyzing] (Legionella pneumophila (strain Lens)).